The sequence spans 104 residues: AVIToxin-VAR1 (104 aa).

Positions 1–19 are cleaved as a signal peptide; that stretch reads MRSLLCAPLLLLLLSAGES. 5 cysteine pairs are disulfide-bonded: cysteine 26-cysteine 38, cysteine 32-cysteine 50, cysteine 37-cysteine 78, cysteine 60-cysteine 86, and cysteine 80-cysteine 96.

The protein belongs to the AVIT (prokineticin) family. Expressed by the venom gland.

Its subcellular location is the secreted. Its function is as follows. Potent agonist for both PKR1/PROKR1 and PKR2/PROKR2. Potently contracts gastrointestinal (GI) smooth muscle. The protein is AVIToxin-VAR1 of Varanus varius (Lace monitor lizard).